The sequence spans 652 residues: Leucine-rich repeat-containing protein 4 (652 aa).

An N-terminal signal peptide occupies residues 1–40 (MKLLWQVTVHHTWNAVLLPVVYLTAQVWILCAAIAAAASA). Residues 1–526 (MKLLWQVTVH…SLDEVMKTTK (526 aa)) are Extracellular-facing. One can recognise an LRRNT domain in the interval 41-74 (GPQNCPSVCSCSNQFSKVVCTRRGLSEVPQGIPS). Disulfide bonds link Cys-45-Cys-51 and Cys-49-Cys-60. 9 LRR repeats span residues 75–96 (NTRY…TFRH), 99–120 (HLEV…AFNG), 123–144 (SLNT…AFEY), 147–168 (KLRE…AFNR), 171–193 (SLMR…AFEG), 196–217 (NLKY…TPLV), 218–239 (GLEE…SFHG), 242–263 (SLKK…AFDG), and 266–287 (SLVE…LFTP). The LRRCT domain occupies 299 to 351 (NPWNCDCDILWLAWWLREYIPTNSTCCGRCHAPMHMRGRYLVEVDQASFQCSA). Cystine bridges form between Cys-303–Cys-328 and Cys-305–Cys-349. N-linked (GlcNAc...) asparagine glycans are attached at residues Asn-321 and Asn-362. The Ig-like C2-type domain maps to 352-441 (PFIMDAPRDL…SNASAYLNVS (90 aa)). An intrachain disulfide couples Cys-373 to Cys-423. The helical transmembrane segment at 527–547 (IIIGCFVAVTLLAAAMLIVFY) threads the bilayer. Residues 548 to 652 (KLRKRHQQRS…TKDKVQETQI (105 aa)) are Cytoplasmic-facing.

In terms of assembly, interacts (via LRR repeats) with NTNG2. Interacts with DLG4. Found in a complex with NMDA receptors. In terms of processing, N-glycosylated. In terms of tissue distribution, mainly expressed in the brain. Expression is concentrated in the olfactory bulb, cortex, hippocampus and cerebellum in adult brain. Detected both embryonically and postnatally with stronger expression in postnatal stages.

The protein localises to the membrane. The protein resides in the postsynaptic cell membrane. Synaptic adhesion protein. Regulates the formation of exitatory synapses through the recruitment of pre-and-postsynaptic proteins. Organize the lamina/pathway-specific differentiation of dendrites. Plays an important role for auditory synaptic responses. Involved in the suppression of glioma. This is Leucine-rich repeat-containing protein 4 (Lrrc4) from Rattus norvegicus (Rat).